We begin with the raw amino-acid sequence, 53 residues long: Toxin CjTL7 (53 aa).

An N-terminal signal peptide occupies residues 1–22 (MMIKVLLLLSSALVLFTPEAEG). W51 bears the Tryptophan amide mark.

Post-translationally, contains 4 disulfide bonds.

It is found in the secreted. Its subcellular location is the nematocyst. Functionally, in vivo, only causes a weak change in behavior in shrimps (C.multidentata) (slight twitching of the walking legs), but no lethal effect is observed. No activity is observed when injected into fly larvae (M.domestica). In Epiactis japonica (Sea anemone), this protein is Toxin CjTL7.